The sequence spans 604 residues: Aspartate--tRNA(Asp/Asn) ligase (604 aa).

Glu-175 contributes to the L-aspartate binding site. The aspartate stretch occupies residues 199-202; that stretch reads QQFK. L-aspartate-binding residues include Arg-221 and His-456. Residue 221-223 participates in ATP binding; sequence RDE. ATP is bound at residue Glu-496. Arg-503 lines the L-aspartate pocket. 548-551 is a binding site for ATP; it reads GVDR.

This sequence belongs to the class-II aminoacyl-tRNA synthetase family. Type 1 subfamily. As to quaternary structure, homodimer.

The protein localises to the cytoplasm. It catalyses the reaction tRNA(Asx) + L-aspartate + ATP = L-aspartyl-tRNA(Asx) + AMP + diphosphate. In terms of biological role, aspartyl-tRNA synthetase with relaxed tRNA specificity since it is able to aspartylate not only its cognate tRNA(Asp) but also tRNA(Asn). Reaction proceeds in two steps: L-aspartate is first activated by ATP to form Asp-AMP and then transferred to the acceptor end of tRNA(Asp/Asn). In Methylobacterium sp. (strain 4-46), this protein is Aspartate--tRNA(Asp/Asn) ligase.